Consider the following 320-residue polypeptide: tRNA U34 carboxymethyltransferase (320 aa).

Carboxy-S-adenosyl-L-methionine is bound by residues Lys-89, Trp-103, Lys-108, Gly-128, 150–152, 179–180, Met-194, Tyr-198, and Arg-313; these read DPT and LE.

The protein belongs to the class I-like SAM-binding methyltransferase superfamily. CmoB family. As to quaternary structure, homotetramer.

It catalyses the reaction carboxy-S-adenosyl-L-methionine + 5-hydroxyuridine(34) in tRNA = 5-carboxymethoxyuridine(34) in tRNA + S-adenosyl-L-homocysteine + H(+). Functionally, catalyzes carboxymethyl transfer from carboxy-S-adenosyl-L-methionine (Cx-SAM) to 5-hydroxyuridine (ho5U) to form 5-carboxymethoxyuridine (cmo5U) at position 34 in tRNAs. The polypeptide is tRNA U34 carboxymethyltransferase (Haemophilus ducreyi (strain 35000HP / ATCC 700724)).